Consider the following 455-residue polypeptide: Bifunctional protein GlmU (455 aa).

The pyrophosphorylase stretch occupies residues 1-228; that stretch reads MYKCALVLAA…YEETIGVNSR (228 aa). UDP-N-acetyl-alpha-D-glucosamine contacts are provided by residues 8–11, lysine 22, glutamine 73, and 78–79; these read LAAG and GT. Aspartate 103 is a binding site for Mg(2+). UDP-N-acetyl-alpha-D-glucosamine is bound by residues glycine 140, glutamate 154, asparagine 169, and asparagine 226. Asparagine 226 serves as a coordination point for Mg(2+). A linker region spans residues 229–249; the sequence is VQLAEAEEILKNRINLMHMEN. The interval 250–455 is N-acetyltransferase; sequence GVTLIDPRTT…GWVDKKGLKK (206 aa). Residues arginine 331 and lysine 349 each contribute to the UDP-N-acetyl-alpha-D-glucosamine site. Histidine 361 serves as the catalytic Proton acceptor. The UDP-N-acetyl-alpha-D-glucosamine site is built by tyrosine 364 and asparagine 375. Acetyl-CoA is bound by residues 384 to 385, alanine 421, and arginine 438; that span reads NY.

It in the N-terminal section; belongs to the N-acetylglucosamine-1-phosphate uridyltransferase family. The protein in the C-terminal section; belongs to the transferase hexapeptide repeat family. As to quaternary structure, homotrimer. Requires Mg(2+) as cofactor.

It localises to the cytoplasm. It catalyses the reaction alpha-D-glucosamine 1-phosphate + acetyl-CoA = N-acetyl-alpha-D-glucosamine 1-phosphate + CoA + H(+). The catalysed reaction is N-acetyl-alpha-D-glucosamine 1-phosphate + UTP + H(+) = UDP-N-acetyl-alpha-D-glucosamine + diphosphate. It functions in the pathway nucleotide-sugar biosynthesis; UDP-N-acetyl-alpha-D-glucosamine biosynthesis; N-acetyl-alpha-D-glucosamine 1-phosphate from alpha-D-glucosamine 6-phosphate (route II): step 2/2. It participates in nucleotide-sugar biosynthesis; UDP-N-acetyl-alpha-D-glucosamine biosynthesis; UDP-N-acetyl-alpha-D-glucosamine from N-acetyl-alpha-D-glucosamine 1-phosphate: step 1/1. The protein operates within bacterial outer membrane biogenesis; LPS lipid A biosynthesis. Its function is as follows. Catalyzes the last two sequential reactions in the de novo biosynthetic pathway for UDP-N-acetylglucosamine (UDP-GlcNAc). The C-terminal domain catalyzes the transfer of acetyl group from acetyl coenzyme A to glucosamine-1-phosphate (GlcN-1-P) to produce N-acetylglucosamine-1-phosphate (GlcNAc-1-P), which is converted into UDP-GlcNAc by the transfer of uridine 5-monophosphate (from uridine 5-triphosphate), a reaction catalyzed by the N-terminal domain. The chain is Bifunctional protein GlmU from Clostridium beijerinckii (strain ATCC 51743 / NCIMB 8052) (Clostridium acetobutylicum).